A 341-amino-acid chain; its full sequence is HTH-type transcriptional repressor PurR (341 aa).

The HTH lacI-type domain maps to 2–56; it reads ATIKDVAKRANVSTTTVSHVINKTRFVAEETRNAVWAAIKELHYSPSAVARSLKV. Residues 4 to 23 constitute a DNA-binding region (H-T-H motif); sequence IKDVAKRANVSTTTVSHVIN. The DNA-binding element occupies 48–56; sequence SAVARSLKV. Tyr-73, Arg-190, Thr-192, Phe-221, and Asp-275 together coordinate hypoxanthine.

Homodimer.

The protein operates within purine metabolism; purine nucleotide biosynthesis [regulation]. Functionally, is the main repressor of the genes involved in the de novo synthesis of purine nucleotides, regulating purB, purC, purEK, purF, purHD, purL, purMN and guaBA expression. PurR is allosterically activated to bind its cognate DNA by binding the purine corepressors, hypoxanthine or guanine, thereby effecting transcription repression. The polypeptide is HTH-type transcriptional repressor PurR (Escherichia coli (strain UTI89 / UPEC)).